A 1021-amino-acid polypeptide reads, in one-letter code: Sodium/potassium-transporting ATPase subunit alpha-1 (1021 aa).

Residues 1-5 (MGKGV) constitute a propeptide that is removed on maturation. Over residues 1 to 11 (MGKGVGRDKYE) the composition is skewed to basic and acidic residues. Positions 1-37 (MGKGVGRDKYEPAAVSEHGDKKKAKKERDMDELKKEV) are disordered. The Cytoplasmic portion of the chain corresponds to 6 to 85 (GRDKYEPAAV…NALTPPPTTP (80 aa)). Residue Lys-9 is modified to N6-acetyllysine. Residue Tyr-10 is modified to Phosphotyrosine. Position 16 is a phosphoserine; by PKC (Ser-16). The residue at position 21 (Lys-21) is an N6-acetyllysine. A compositionally biased stretch (basic and acidic residues) spans 26–37 (KERDMDELKKEV). Ser-38 and Ser-45 each carry phosphoserine. A phosphoinositide-3 kinase binding region spans residues 80–82 (PPP). A helical membrane pass occupies residues 86–106 (EWVKFCRQLFGGFSMLLWIGA). Topologically, residues 107-129 (ILCFLAYGIQAATEEEPQNDNLY) are extracellular. A helical membrane pass occupies residues 130-150 (LGVVLSAVVIITGCFSYYQEA). Topologically, residues 151-286 (KSSKIMESFK…GGQTPIAAEI (136 aa)) are cytoplasmic. A disordered region spans residues 214 to 233 (SSLTGESEPQTRSPDFTNEN). At Ser-226 the chain carries Phosphoserine. Tyr-258 carries the post-translational modification Phosphotyrosine. The helical transmembrane segment at 287–306 (EHFIHIITGVAVFLGVSFFI) threads the bilayer. The Extracellular portion of the chain corresponds to 307 to 318 (LSLILEYTWLEA). Residues 319–336 (VIFLIGIIVANVPEGLLA) traverse the membrane as a helical segment. Residues 337–770 (TVTVCLTLTA…EEGRLIFDNL (434 aa)) are Cytoplasmic-facing. The active-site 4-aspartylphosphate intermediate is the Asp-374. Residues Ser-450 and Ser-482 each carry the phosphoserine modification. Lys-485 is a binding site for ATP. Tyr-540 carries the post-translational modification Phosphotyrosine. The segment at 594–715 (RAAVPDAVGK…QGAIVAVTGD (122 aa)) is mediates interaction with SCN7A. An N6-succinyllysine modification is found at Lys-659. 2 positions are modified to phosphoserine: Ser-666 and Ser-673. Asp-715 and Asp-719 together coordinate Mg(2+). The chain crosses the membrane as a helical span at residues 771–790 (KKSIAYTLTSNIPEITPFLI). Topologically, residues 791-800 (FIIANIPLPL) are extracellular. Residues 801-821 (GTVTILCIDLGTDMVPAISLA) form a helical membrane-spanning segment. Residues 822–841 (YEQAESDIMKRQPRNPKTDK) are Cytoplasmic-facing. Residues 842-864 (LVNEQLISMAYGQIGMIQALGGF) form a helical membrane-spanning segment. Residues 865-916 (FTYFVILAENGFLPIHLLGLRVNWDDRWINDVEDSYGQQWTYEQRKIVEFTC) are Extracellular-facing. The chain crosses the membrane as a helical span at residues 917 to 936 (HTPFFVTIVVVQWADLVICK). Topologically, residues 937-949 (TRRNSVFQQGMKN) are cytoplasmic. At Ser-941 the chain carries Phosphoserine; by PKA. A helical transmembrane segment spans residues 950-968 (KILIFGLFEETALAAFLSY). Over 969 to 983 (CPGMGVALRMYPLKP) the chain is Extracellular. The helical transmembrane segment at 984-1004 (TWWFCAFPYSLLIFVYDEVRK) threads the bilayer. The Cytoplasmic portion of the chain corresponds to 1005-1021 (LIIRRRPGGWVEKETYY).

It belongs to the cation transport ATPase (P-type) (TC 3.A.3) family. Type IIC subfamily. In terms of assembly, the sodium/potassium-transporting ATPase is composed of a catalytic alpha subunit, an auxiliary non-catalytic beta subunit and an additional regulatory subunit. Interacts with regulatory subunit FXYD1. Interacts with regulatory subunit FXYD3. Interacts with SIK1. Interacts with SLC35G1 and STIM1. Interacts with CLN3; this interaction regulates the sodium/potassium-transporting ATPase complex localization at the plasma membrane. Interacts with SCN7A; activates ATP1A1 P-type sodium:potassium-exchanging transporter activity which indirectly signals to nearby neurons to regulate sodium homeostasis. In terms of processing, phosphorylation on Tyr-10 modulates pumping activity. Phosphorylation of Ser-941 by PKA modulates the response of ATP1A1 to PKC. Dephosphorylation by protein phosphatase 2A (PP2A) following increases in intracellular sodium, leading to increase catalytic activity.

It is found in the cell membrane. Its subcellular location is the basolateral cell membrane. It localises to the sarcolemma. The protein resides in the cell projection. The protein localises to the axon. It is found in the melanosome. It catalyses the reaction K(+)(out) + Na(+)(in) + ATP + H2O = K(+)(in) + Na(+)(out) + ADP + phosphate + H(+). Its function is as follows. This is the catalytic component of the active enzyme, which catalyzes the hydrolysis of ATP coupled with the exchange of sodium and potassium ions across the plasma membrane. This action creates the electrochemical gradient of sodium and potassium ions, providing the energy for active transport of various nutrients. Could also be part of an osmosensory signaling pathway that senses body-fluid sodium levels and controls salt intake behavior as well as voluntary water intake to regulate sodium homeostasis. The sequence is that of Sodium/potassium-transporting ATPase subunit alpha-1 (ATP1A1) from Sus scrofa (Pig).